The sequence spans 420 residues: Gamma-glutamyl phosphate reductase (420 aa).

Belongs to the gamma-glutamyl phosphate reductase family.

It is found in the cytoplasm. The enzyme catalyses L-glutamate 5-semialdehyde + phosphate + NADP(+) = L-glutamyl 5-phosphate + NADPH + H(+). Its pathway is amino-acid biosynthesis; L-proline biosynthesis; L-glutamate 5-semialdehyde from L-glutamate: step 2/2. Its function is as follows. Catalyzes the NADPH-dependent reduction of L-glutamate 5-phosphate into L-glutamate 5-semialdehyde and phosphate. The product spontaneously undergoes cyclization to form 1-pyrroline-5-carboxylate. The protein is Gamma-glutamyl phosphate reductase of Streptococcus pneumoniae serotype 19F (strain G54).